Consider the following 132-residue polypeptide: ATP synthase epsilon chain (132 aa).

It belongs to the ATPase epsilon chain family. In terms of assembly, F-type ATPases have 2 components, CF(1) - the catalytic core - and CF(0) - the membrane proton channel. CF(1) has five subunits: alpha(3), beta(3), gamma(1), delta(1), epsilon(1). CF(0) has three main subunits: a, b and c.

The protein localises to the cell membrane. Its function is as follows. Produces ATP from ADP in the presence of a proton gradient across the membrane. This chain is ATP synthase epsilon chain (atpC), found in Geobacillus stearothermophilus (Bacillus stearothermophilus).